Reading from the N-terminus, the 527-residue chain is UPF0053 protein YegH (527 aa).

7 consecutive transmembrane segments (helical) span residues 14–34 (ITLI…IAIL), 51–71 (LLLA…LVTL), 81–101 (FTFS…LFKA), 122–142 (GAKF…FSLD), 145–165 (ITAV…VIAI), 185–205 (IVIL…AEGF), and 207–227 (FVIP…IEAL). 2 CBS domains span residues 306–366 (MTSR…GEPL) and 371–429 (LIRQ…PNEV).

This sequence belongs to the UPF0053 family.

It localises to the cell membrane. In Shigella flexneri, this protein is UPF0053 protein YegH (yegH).